Consider the following 388-residue polypeptide: N-acetylneuraminate epimerase (388 aa).

The N-terminal stretch at 1 to 26 (MFSLIGAKRQAIGIAALAWSTGAVMA) is a signal peptide. 7 Kelch repeats span residues 48-92 (MAYV…AAAG), 94-147 (KIFA…VGLA), 149-186 (GRIA…KLVD), 187-232 (SYMG…ATMG), 236-285 (FLLV…VAGA), 307-356 (ANAA…DAPG), and 358-387 (LLVV…LSVE).

Belongs to the NanM family. As to quaternary structure, homodimer.

The protein resides in the periplasm. It carries out the reaction N-acetyl-alpha-neuraminate = N-acetyl-beta-neuraminate. Converts alpha-N-acetylneuranimic acid (Neu5Ac) to the beta-anomer, accelerating the equilibrium between the alpha- and beta-anomers. Probably facilitates sialidase-negative bacteria to compete successfully for limited amounts of extracellular Neu5Ac, which is likely taken up in the beta-anomer. In addition, the rapid removal of sialic acid from solution might be advantageous to the bacterium to damp down host responses. The protein is N-acetylneuraminate epimerase of Brucella suis (strain ATCC 23445 / NCTC 10510).